Reading from the N-terminus, the 139-residue chain is Large ribosomal subunit protein uL16 (139 aa).

Over residues methionine 1–valine 16 the composition is skewed to basic residues. The interval methionine 1 to lysine 22 is disordered.

Belongs to the universal ribosomal protein uL16 family. In terms of assembly, part of the 50S ribosomal subunit.

Functionally, binds 23S rRNA and is also seen to make contacts with the A and possibly P site tRNAs. In Bifidobacterium longum (strain DJO10A), this protein is Large ribosomal subunit protein uL16.